A 236-amino-acid chain; its full sequence is H2HPP isomerase (236 aa).

2 consecutive Cupin type-2 domains span residues 40 to 106 (YVPP…AIDI) and 151 to 215 (NIPG…SKSV). Positions 50, 52, 56, 91, 162, 164, 168, and 202 each coordinate a divalent metal cation. Residue Tyr223 participates in substrate binding.

Monomer. Fe(2+) serves as cofactor. It depends on Co(2+) as a cofactor.

It localises to the cytoplasm. It carries out the reaction 3-[(4R)-4-hydroxycyclohexa-1,5-dien-1-yl]-2-oxopropanoate = 3-[(1E,4R)-4-hydroxycyclohex-2-en-1-ylidene]pyruvate. Its pathway is antibiotic biosynthesis; bacilysin biosynthesis. In terms of biological role, part of the bacABCDEF operon responsible for the biosynthesis of the nonribosomally synthesized dipeptide antibiotic bacilysin, composed of L-alanine and L-anticapsin. Bacilysin is an irreversible inactivator of the glutaminase domain of glucosamine synthetase. BacB catalyzes the allylic isomerization of the endocyclic-delta(4),delta(8)-7R-dihydro-hydroxyphenylpyruvate (en-H2HPP) to generate a mixture of 3E,7R- and 3Z, 7R-olefins of the exocyclic-delta(3),delta(5)-dihydro-hydroxyphenylpyruvate (ex-H2HPP). The polypeptide is H2HPP isomerase (Bacillus amyloliquefaciens (Bacillus velezensis)).